The following is a 312-amino-acid chain: Acetyl-coenzyme A carboxylase carboxyl transferase subunit alpha (312 aa).

The 251-residue stretch at 36–286 (RLDKEVKSIY…KEYFLDALRT (251 aa)) folds into the CoA carboxyltransferase C-terminal domain.

The protein belongs to the AccA family. As to quaternary structure, acetyl-CoA carboxylase is a heterohexamer composed of biotin carboxyl carrier protein (AccB), biotin carboxylase (AccC) and two subunits each of ACCase subunit alpha (AccA) and ACCase subunit beta (AccD).

The protein localises to the cytoplasm. It carries out the reaction N(6)-carboxybiotinyl-L-lysyl-[protein] + acetyl-CoA = N(6)-biotinyl-L-lysyl-[protein] + malonyl-CoA. It participates in lipid metabolism; malonyl-CoA biosynthesis; malonyl-CoA from acetyl-CoA: step 1/1. Its function is as follows. Component of the acetyl coenzyme A carboxylase (ACC) complex. First, biotin carboxylase catalyzes the carboxylation of biotin on its carrier protein (BCCP) and then the CO(2) group is transferred by the carboxyltransferase to acetyl-CoA to form malonyl-CoA. In Helicobacter pylori (strain ATCC 700392 / 26695) (Campylobacter pylori), this protein is Acetyl-coenzyme A carboxylase carboxyl transferase subunit alpha.